We begin with the raw amino-acid sequence, 1164 residues long: IgA FC receptor (1164 aa).

A signal peptide spans 1-37 (MFKSNYERKMRYSIRKFSVGVASVAVASLFMGSVAHA). Disordered regions lie at residues 54–75 (KPYP…ELET) and 167–220 (HEEV…EDKD). Positions 59 to 73 (MAQTDQGNNSSSSEL) are enriched in polar residues. Composition is skewed to basic and acidic residues over residues 167–176 (HEEVEKDKKA) and 183–220 (KQSD…EDKD). IgA-binding regions lie at residues 199-438 (NHQK…KIEL) and 439-826 (TVSP…ETNT). The 101-residue stretch at 434-534 (QKIELTVSPE…VEKTFTITVQ (101 aa)) folds into the Ig-like domain. Positions 536-564 (KEEKQVPKTPEQKDSKTEEKVPQEPKSND) are enriched in basic and acidic residues. Disordered regions lie at residues 536–567 (KEEK…DKNQ) and 823–947 (ETNT…PDGL). The span at 911–920 (PKIPEPPKTP) shows a compositional bias: pro residues. Residues 1132–1136 (LPYTG) carry the LPXTG sorting signal motif. The residue at position 1135 (Thr-1135) is a Pentaglycyl murein peptidoglycan amidated threonine. A propeptide spans 1136-1164 (GVASNLVLEIMGLLGLIGTSFIAMKRRKS) (removed by sortase).

The protein localises to the secreted. It is found in the cell wall. This Streptococcus agalactiae protein is IgA FC receptor (bag).